A 126-amino-acid polypeptide reads, in one-letter code: Fluoride-specific ion channel FluC (126 aa).

Helical transmembrane passes span Gly-5–Val-25, Tyr-36–Phe-56, Leu-69–Ile-89, and Trp-99–Ile-119. Na(+)-binding residues include Gly-76 and Thr-79.

It belongs to the fluoride channel Fluc/FEX (TC 1.A.43) family.

The protein localises to the cell inner membrane. It carries out the reaction fluoride(in) = fluoride(out). Na(+) is not transported, but it plays an essential structural role and its presence is essential for fluoride channel function. Its function is as follows. Fluoride-specific ion channel. Important for reducing fluoride concentration in the cell, thus reducing its toxicity. In Cupriavidus metallidurans (strain ATCC 43123 / DSM 2839 / NBRC 102507 / CH34) (Ralstonia metallidurans), this protein is Fluoride-specific ion channel FluC.